The chain runs to 546 residues: uncharacterized protein (546 aa).

3 disordered regions span residues 37-101 (KEND…NQKL), 269-300 (QNKA…QPEV), and 392-443 (LSDL…TSAC). 2 stretches are compositionally biased toward basic and acidic residues: residues 81 to 93 (DDVK…ENNQ) and 274 to 283 (ADLRKTESHG). A compositionally biased stretch (low complexity) spans 284–298 (THSQSTPPQHSSSQP).

This is an uncharacterized protein from Homo sapiens (Human).